The primary structure comprises 205 residues: Holliday junction branch migration complex subunit RuvA (205 aa).

The interval 1 to 64 (MIAHLRGELV…EDALTLYGFL (64 aa)) is domain I. The interval 65 to 143 (TQAEYDLFEL…AVPAGGGGVP (79 aa)) is domain II. Positions 144 to 153 (DGLPVAVAPA) are flexible linker. The segment at 153–205 (AGDAWAEASEALIALGYSRGEAAAALARVRAEAGEAPSVETLVRLALKQLYRG) is domain III.

It belongs to the RuvA family. As to quaternary structure, homotetramer. Forms an RuvA(8)-RuvB(12)-Holliday junction (HJ) complex. HJ DNA is sandwiched between 2 RuvA tetramers; dsDNA enters through RuvA and exits via RuvB. An RuvB hexamer assembles on each DNA strand where it exits the tetramer. Each RuvB hexamer is contacted by two RuvA subunits (via domain III) on 2 adjacent RuvB subunits; this complex drives branch migration. In the full resolvosome a probable DNA-RuvA(4)-RuvB(12)-RuvC(2) complex forms which resolves the HJ.

The protein resides in the cytoplasm. Its function is as follows. The RuvA-RuvB-RuvC complex processes Holliday junction (HJ) DNA during genetic recombination and DNA repair, while the RuvA-RuvB complex plays an important role in the rescue of blocked DNA replication forks via replication fork reversal (RFR). RuvA specifically binds to HJ cruciform DNA, conferring on it an open structure. The RuvB hexamer acts as an ATP-dependent pump, pulling dsDNA into and through the RuvAB complex. HJ branch migration allows RuvC to scan DNA until it finds its consensus sequence, where it cleaves and resolves the cruciform DNA. The protein is Holliday junction branch migration complex subunit RuvA of Symbiobacterium thermophilum (strain DSM 24528 / JCM 14929 / IAM 14863 / T).